Reading from the N-terminus, the 2226-residue chain is Histone-lysine N-methyltransferase ash1 (2226 aa).

The tract at residues 1-145 (MSCSQNETAA…SDSEDDLPLK (145 aa)) is disordered. A compositionally biased stretch (polar residues) spans 32-52 (ITDQSSQSKSIKSATQFSVQR). The segment covering 99 to 111 (AVSKKVKVKRKKL) has biased composition (basic residues). Phosphoserine occurs at positions 135, 136, and 138. 2 positions are modified to phosphothreonine: T200 and T201. Over residues 260-269 (PRKRRGRPKK) the composition is skewed to basic residues. Disordered stretches follow at residues 260-324 (PRKR…IASS), 343-367 (RVLY…SSNK), 673-695 (AQQL…KRGL), 711-749 (SASA…HKLP), and 811-832 (KRHL…SNSP). Positions 261-273 (RKRRGRPKKVVPT) form a DNA-binding region, a.T hook 1. Positions 294–306 (STTSTTQSTTPSP) are enriched in low complexity. Positions 307-324 (KMQNENAVPTGSLPIASS) are enriched in polar residues. Low complexity predominate over residues 711–727 (SASASGTPNGSGSSNGN). Phosphoserine is present on residues S740, S831, and S977. The segment covering 820–831 (SVSGAGSSASNS) has biased composition (low complexity). 2 disordered regions span residues 980 to 1026 (QQTT…DCER) and 1049 to 1230 (SVVA…TTSL). Residues 989–999 (HEPEFDPDDEP) show a composition bias toward acidic residues. DNA-binding regions (a.T hook) lie at residues 1065–1077 (GRPR…NREQ) and 1095–1107 (AKKR…QPVL). Residues 1108–1117 (EEPPPTPPPQ) are compositionally biased toward pro residues. Residues 1186-1200 (AEAKRLDSIPTEHDP) are compositionally biased toward basic and acidic residues. A compositionally biased stretch (polar residues) spans 1205–1219 (ESHNPGPQDYASCSE). Residues 1339–1387 (FDHPTCNCKNQGEKSCLDNCLNRMVYTECSPSNCPAGEKCRNQKIQRHA) form the AWS domain. In terms of domain architecture, SET spans 1390 to 1506 (PGVERFMTAD…EGEELTYDYN (117 aa)). Positions 1514 to 1530 (EGQPCRCNTPQCRGVIG) constitute a Post-SET domain. Disordered regions lie at residues 1536–1575 (VKPL…GKDI) and 1616–1648 (RASD…SSPS). Over residues 1556 to 1568 (GRQRKQKAKKHAQ) the composition is skewed to basic residues. Composition is skewed to low complexity over residues 1619 to 1628 (DAAATASSPA) and 1639 to 1648 (RRPSTPSSPS). The region spanning 1681–1789 (KMAVVLRDIC…DSYEQQKIAS (109 aa)) is the Bromo domain. The tract at residues 1808–1839 (PKEVLSSEEEPGKIAVKKSPGAKERDSPIVPL) is disordered. The PHD-type zinc-finger motif lies at 1857 to 1903 (VIRCICGLYKDEGLMIQCSKCMVWQHTECTKADIDADNYQCERCEPR). In terms of domain architecture, BAH spans 1952-2072 (KVLPTKKHTY…KTARFFSKAK (121 aa)). The segment at 2205 to 2226 (SGRGARQRKTQQSSSSSTANST) is disordered. Over residues 2214-2226 (TQQSSSSSTANST) the composition is skewed to low complexity.

This sequence belongs to the class V-like SAM-binding methyltransferase superfamily. Histone-lysine methyltransferase family. SET2 subfamily. As to quaternary structure, component of a large multiprotein complex distinct from complexes containing ash2 or brm. Interacts (via SET domain) with trx (via SET domain). Interacts with nej/cbp. As to expression, expressed throughout development but is present at higher levels during the embryonic and pupal stages than during the larval stages. During the larval stages it accumulates primarily in imaginal disks.

The protein resides in the nucleus. The protein localises to the chromosome. The catalysed reaction is L-lysyl(4)-[histone H3] + 3 S-adenosyl-L-methionine = N(6),N(6),N(6)-trimethyl-L-lysyl(4)-[histone H3] + 3 S-adenosyl-L-homocysteine + 3 H(+). Trithorax group (TrxG) protein that has histone methyltransferase activity. Specifically trimethylates 'Lys-4' of histone H3 (H3K4me3), a specific tag for epigenetic transcriptional activation. TrxG proteins are generally required to maintain the transcriptionally active state of homeotic genes throughout development. Does not act as a coactivator required for transcriptional activation, but specifically prevents inappropriate Polycomb Group (PcG) silencing of homeotic genes in cells in which they must stay transcriptionally active. The chain is Histone-lysine N-methyltransferase ash1 (ash1) from Drosophila melanogaster (Fruit fly).